The sequence spans 72 residues: BBSome-interacting protein 1 (72 aa).

This sequence belongs to the BBIP10 family.

It is found in the cell projection. It localises to the cilium. The protein resides in the cytoplasm. Required for primary cilia assembly. This Danio rerio (Zebrafish) protein is BBSome-interacting protein 1 (bbip1).